Consider the following 892-residue polypeptide: MSQQTTIRKLAELVNTPVEKLLEQLAGAGMKFSGPDQVVTSTEKMKLLGFLRRTHGKSDVSVGAVREAPKKITLNRRRLQEVTVNAGRNKTTVNVEVRQKRTYVKTPESEYHTPTKPPIELGDAERVEILRKLEESRQRNLAEQQRLAEVDRQRVEEQERKRLEEEQAELERQKTESPVVEEVPVQSDSNSVKPVSKPISEDRTRALPRAVRPAPAARPSVSRSDDRNSNSGVRHKPRGSHVIVSDEDDSARRFAGQMHLTAAERARRGSNTRGKGGGSHRGATHRGNENSIRSSGAHGFERPTAAVVREVAVGDTITVADLAQKLALKSGDMVKALFKMGVMVTITQTIDHDTAVLVSEELGHKVTRASSSDFEDALLAHTEEVHGEPVPRPPVVTIMGHVDHGKTSLLDYIRRTKIAVGEAGGITQHIGAYHVETPRGVISFLDTPGHAAFTSMRARGAKITDIVVLVVAADDGVMPQTKEAVQHARAAGVPLIVAVSKIDKSTADPQRVKNELLTESVVAEEFGGDTQFVELSAKTGVGVDALLDAISIQAEVLELKAVIEGRATGTVIESSLDKGRGPVATVLVQQGRLKKGDYLVCGTHYGRVRALFDEVGHQPLAASPSIPVQVLGLSGVPDAGDDFVVVDDERLAKDVAQQREAKRRESRLVTSAGNRMEDILAQMGKGENQQVLNLLIKADVQGSLEALKQALVALSNDDIRINVIHVGVGGITESDANSAVTSKATVIGFNVRADASARKIIEANGVDLRYFSIIYDVIDQVKQVASGLLGVEIREEIIGVAEVRDVFRSSKFGAVAGCMIIEGVVKRSKPIRVLRDNTVVFEGELESLRRFKENVDEVRNSTECGIGVKAYNDVRVGDHIECFERIEVARTL.

The span at 165–175 shows a compositional bias: basic and acidic residues; that stretch reads EEQAELERQKT. Disordered regions lie at residues 165 to 250 and 264 to 300; these read EEQA…EDDS and ERAR…AHGF. Over residues 208-222 the composition is skewed to low complexity; that stretch reads PRAVRPAPAARPSVS. The 170-residue stretch at 391-560 folds into the tr-type G domain; that stretch reads PRPPVVTIMG…SIQAEVLELK (170 aa). Residues 400 to 407, 446 to 450, and 500 to 503 contribute to the GTP site; these read GHVDHGKT, DTPGH, and SKID.

The protein belongs to the TRAFAC class translation factor GTPase superfamily. Classic translation factor GTPase family. IF-2 subfamily.

Its subcellular location is the cytoplasm. One of the essential components for the initiation of protein synthesis. Protects formylmethionyl-tRNA from spontaneous hydrolysis and promotes its binding to the 30S ribosomal subunits. Also involved in the hydrolysis of GTP during the formation of the 70S ribosomal complex. The chain is Translation initiation factor IF-2 from Xylella fastidiosa (strain 9a5c).